The sequence spans 132 residues: Probable prefoldin subunit 4 (132 aa).

The protein belongs to the prefoldin subunit beta family. As to quaternary structure, heterohexamer of two PFD-alpha type and four PFD-beta type subunits.

In terms of biological role, binds specifically to cytosolic chaperonin (c-CPN) and transfers target proteins to it. Binds to nascent polypeptide chain and promotes folding in an environment in which there are many competing pathways for nonnative proteins. The protein is Probable prefoldin subunit 4 (pfdn4) of Dictyostelium discoideum (Social amoeba).